The chain runs to 422 residues: L-threonine dehydratase biosynthetic IlvA (422 aa).

An N6-(pyridoxal phosphate)lysine modification is found at Lys56. Residues Asn83, Gly189–Leu193, and Ser315 each bind pyridoxal 5'-phosphate. The 75-residue stretch at His339–Glu413 folds into the ACT-like domain.

Belongs to the serine/threonine dehydratase family. Homotetramer. Pyridoxal 5'-phosphate is required as a cofactor.

The enzyme catalyses L-threonine = 2-oxobutanoate + NH4(+). Its pathway is amino-acid biosynthesis; L-isoleucine biosynthesis; 2-oxobutanoate from L-threonine: step 1/1. Functionally, catalyzes the anaerobic formation of alpha-ketobutyrate and ammonia from threonine in a two-step reaction. The first step involved a dehydration of threonine and a production of enamine intermediates (aminocrotonate), which tautomerizes to its imine form (iminobutyrate). Both intermediates are unstable and short-lived. The second step is the nonenzymatic hydrolysis of the enamine/imine intermediates to form 2-ketobutyrate and free ammonia. In the low water environment of the cell, the second step is accelerated by RidA. This Staphylococcus epidermidis (strain ATCC 12228 / FDA PCI 1200) protein is L-threonine dehydratase biosynthetic IlvA (ilvA).